A 207-amino-acid polypeptide reads, in one-letter code: Probable GTP-binding protein EngB (207 aa).

In terms of domain architecture, EngB-type G spans 23-203 (GAPEVCFVGR…GAHIENWISP (181 aa)). GTP contacts are provided by residues 31 to 38 (GRSNAGKS), 58 to 62 (GRTRL), 83 to 86 (DLPG), 150 to 153 (TKAD), and 182 to 184 (FSS). Mg(2+) contacts are provided by Ser-38 and Thr-60.

The protein belongs to the TRAFAC class TrmE-Era-EngA-EngB-Septin-like GTPase superfamily. EngB GTPase family. The cofactor is Mg(2+).

Its function is as follows. Necessary for normal cell division and for the maintenance of normal septation. This Bordetella bronchiseptica (strain ATCC BAA-588 / NCTC 13252 / RB50) (Alcaligenes bronchisepticus) protein is Probable GTP-binding protein EngB.